A 141-amino-acid chain; its full sequence is Hemoglobin subunit alpha (141 aa).

In terms of domain architecture, Globin spans 1–141 (VLSPADKTNV…VSTVLTSKYR (141 aa)). Phosphoserine is present on Ser-3. Lys-7 is subject to N6-succinyllysine. A Phosphothreonine modification is found at Thr-8. Lys-11 is subject to N6-succinyllysine. An N6-acetyllysine; alternate modification is found at Lys-16. An N6-succinyllysine; alternate modification is found at Lys-16. Tyr-24 carries the post-translational modification Phosphotyrosine. The residue at position 35 (Ser-35) is a Phosphoserine. Residue Lys-40 is modified to N6-succinyllysine. Position 49 is a phosphoserine (Ser-49). His-58 provides a ligand contact to O2. His-87 is a heme b binding site. Ser-102 bears the Phosphoserine mark. Thr-108 carries the post-translational modification Phosphothreonine. Ser-124 is subject to Phosphoserine. Phosphothreonine occurs at positions 134 and 137. Ser-138 carries the post-translational modification Phosphoserine.

It belongs to the globin family. Heterotetramer of two alpha chains and two beta chains. As to expression, red blood cells.

Its function is as follows. Involved in oxygen transport from the lung to the various peripheral tissues. Functionally, hemopressin acts as an antagonist peptide of the cannabinoid receptor CNR1. Hemopressin-binding efficiently blocks cannabinoid receptor CNR1 and subsequent signaling. This is Hemoglobin subunit alpha (HBA) from Martes foina (Beech marten).